Reading from the N-terminus, the 105-residue chain is Urease subunit beta (105 aa).

The protein belongs to the urease beta subunit family. In terms of assembly, heterotrimer of UreA (gamma), UreB (beta) and UreC (alpha) subunits. Three heterotrimers associate to form the active enzyme.

It is found in the cytoplasm. It catalyses the reaction urea + 2 H2O + H(+) = hydrogencarbonate + 2 NH4(+). It participates in nitrogen metabolism; urea degradation; CO(2) and NH(3) from urea (urease route): step 1/1. In Pseudomonas entomophila (strain L48), this protein is Urease subunit beta.